Here is a 217-residue protein sequence, read N- to C-terminus: Coiled-coil domain-containing protein 124 (217 aa).

The interval 1–120 is disordered; that stretch reads MPKKFQGENS…PVEKAKSHLE (120 aa). Positions 15–82 form a coiled coil; the sequence is ARARRAEAKA…LLEEEDSRLK (68 aa). 2 stretches are compositionally biased toward basic and acidic residues: residues 18-74 and 98-120; these read RRAE…QRLL and QIED…SHLE. Phosphoserine is present on residues serine 136 and serine 188.

Belongs to the CCDC124 family. Associates with translationally inactive ribosomes in the nonrotated state. Interacts with RASGEF1B.

Its subcellular location is the cytoplasm. It is found in the cytoskeleton. The protein localises to the microtubule organizing center. The protein resides in the centrosome. It localises to the midbody. Ribosome-binding protein involved in ribosome hibernation: associates with translationally inactive ribosomes and stabilizes the nonrotated conformation of the 80S ribosome, thereby promoting ribosome preservation and storage. Also required for proper progression of late cytokinetic stages. This chain is Coiled-coil domain-containing protein 124 (Ccdc124), found in Mus musculus (Mouse).